We begin with the raw amino-acid sequence, 342 residues long: Protein-glutamate methylesterase/protein-glutamine glutaminase 1 (342 aa).

The Response regulatory domain maps to 3-121; it reads RVLVIDDSLF…NIREIGGELK (119 aa). A 4-aspartylphosphate modification is found at Asp54. Positions 141–340 constitute a CheB-type methylesterase domain; that stretch reads DSNARNVVLI…EKIVETIRAM (200 aa). Catalysis depends on residues Ser153, His180, and Asp282.

It belongs to the CheB family. In terms of processing, phosphorylated by CheA. Phosphorylation of the N-terminal regulatory domain activates the methylesterase activity.

The protein localises to the cytoplasm. It catalyses the reaction [protein]-L-glutamate 5-O-methyl ester + H2O = L-glutamyl-[protein] + methanol + H(+). The catalysed reaction is L-glutaminyl-[protein] + H2O = L-glutamyl-[protein] + NH4(+). Involved in chemotaxis. Part of a chemotaxis signal transduction system that modulates chemotaxis in response to various stimuli. Catalyzes the demethylation of specific methylglutamate residues introduced into the chemoreceptors (methyl-accepting chemotaxis proteins or MCP) by CheR. Also mediates the irreversible deamidation of specific glutamine residues to glutamic acid. The protein is Protein-glutamate methylesterase/protein-glutamine glutaminase 1 of Methanospirillum hungatei JF-1 (strain ATCC 27890 / DSM 864 / NBRC 100397 / JF-1).